The chain runs to 567 residues: Oxygen-dependent choline dehydrogenase (567 aa).

4 to 33 (DYIIIGAGSAGNVLAARLTEDADVTVLLLE) provides a ligand contact to FAD. His-473 functions as the Proton acceptor in the catalytic mechanism.

It belongs to the GMC oxidoreductase family. FAD is required as a cofactor.

The catalysed reaction is choline + A = betaine aldehyde + AH2. The enzyme catalyses betaine aldehyde + NAD(+) + H2O = glycine betaine + NADH + 2 H(+). The protein operates within amine and polyamine biosynthesis; betaine biosynthesis via choline pathway; betaine aldehyde from choline (cytochrome c reductase route): step 1/1. Functionally, involved in the biosynthesis of the osmoprotectant glycine betaine. Catalyzes the oxidation of choline to betaine aldehyde and betaine aldehyde to glycine betaine at the same rate. The chain is Oxygen-dependent choline dehydrogenase from Yersinia pestis (strain Pestoides F).